We begin with the raw amino-acid sequence, 198 residues long: Holliday junction branch migration complex subunit RuvA (198 aa).

The segment at methionine 1–aspartate 64 is domain I. The domain II stretch occupies residues serine 65–glutamate 143. The segment at isoleucine 144 to asparagine 149 is flexible linker. The tract at residues glutamate 150–glycine 198 is domain III.

Belongs to the RuvA family. In terms of assembly, homotetramer. Forms an RuvA(8)-RuvB(12)-Holliday junction (HJ) complex. HJ DNA is sandwiched between 2 RuvA tetramers; dsDNA enters through RuvA and exits via RuvB. An RuvB hexamer assembles on each DNA strand where it exits the tetramer. Each RuvB hexamer is contacted by two RuvA subunits (via domain III) on 2 adjacent RuvB subunits; this complex drives branch migration. In the full resolvosome a probable DNA-RuvA(4)-RuvB(12)-RuvC(2) complex forms which resolves the HJ.

The protein resides in the cytoplasm. Functionally, the RuvA-RuvB-RuvC complex processes Holliday junction (HJ) DNA during genetic recombination and DNA repair, while the RuvA-RuvB complex plays an important role in the rescue of blocked DNA replication forks via replication fork reversal (RFR). RuvA specifically binds to HJ cruciform DNA, conferring on it an open structure. The RuvB hexamer acts as an ATP-dependent pump, pulling dsDNA into and through the RuvAB complex. HJ branch migration allows RuvC to scan DNA until it finds its consensus sequence, where it cleaves and resolves the cruciform DNA. The protein is Holliday junction branch migration complex subunit RuvA of Clostridium beijerinckii (strain ATCC 51743 / NCIMB 8052) (Clostridium acetobutylicum).